The primary structure comprises 740 residues: Ribosomal protein S6 kinase alpha-3 (740 aa).

The disordered stretch occupies residues 1–26; sequence MPLAQLADPWQKMAVESPSDSAENGQ. Positions 68-327 constitute a Protein kinase 1 domain; that stretch reads FELLKVLGQG…VEEIKRHSFF (260 aa). ATP is bound by residues 74 to 82 and Lys100; that span reads LGQGSFGKV. Asp193 functions as the Proton acceptor in the catalytic mechanism. The residue at position 227 (Ser227) is a Phosphoserine; by PDPK1. One can recognise an AGC-kinase C-terminal domain in the interval 328–397; that stretch reads STIDWNKLYR…VAITSDDESQ (70 aa). Thr365 carries the post-translational modification Phosphothreonine. Phosphoserine occurs at positions 369 and 375. A Phosphoserine; by autocatalysis and MAPKAPK2 modification is found at Ser386. At Ser415 the chain carries Phosphoserine. The region spanning 422 to 679 is the Protein kinase 2 domain; sequence YEVKEDIGVG…AALVLRHPWI (258 aa). ATP-binding positions include 428 to 436 and Lys451; that span reads IGVGSYSVC. The residue at position 529 (Tyr529) is a Phosphotyrosine; by FGFR3. Asp539 functions as the Proton acceptor in the catalytic mechanism. Ser556 and Ser715 each carry phosphoserine.

Belongs to the protein kinase superfamily. AGC Ser/Thr protein kinase family. S6 kinase subfamily. Forms a complex with either MAPK1/ERK2 or MAPK3/ERK1 in quiescent cells. Transiently dissociates following mitogenic stimulation. Interacts with NFATC4, ETV1/ER81 and FGFR1. Mg(2+) is required as a cofactor. Post-translationally, activated by phosphorylation at Ser-227 by PDPK1. Autophosphorylated on Ser-386, as part of the activation process. May be phosphorylated at Thr-365 and Ser-369 by MAPK1/ERK2 and MAPK3/ERK1. Can also be activated via phosphorylation at Ser-386 by MAPKAPK2. N-terminal myristoylation results in an activated kinase in the absence of added growth factors. Intestine, thymus, lung, heart and brain.

It localises to the nucleus. Its subcellular location is the cytoplasm. The catalysed reaction is L-seryl-[protein] + ATP = O-phospho-L-seryl-[protein] + ADP + H(+). It carries out the reaction L-threonyl-[protein] + ATP = O-phospho-L-threonyl-[protein] + ADP + H(+). With respect to regulation, upon extracellular signal or mitogen stimulation, phosphorylated at Thr-577 in the C-terminal kinase domain (CTKD) by MAPK1/ERK2 and MAPK3/ERK1. The activated CTKD then autophosphorylates Ser-386, allowing binding of PDPK1, which in turn phosphorylates Ser-227 in the N-terminal kinase domain (NTDK) leading to the full activation of the protein and subsequent phosphorylation of the substrates by the NTKD. Functionally, serine/threonine-protein kinase that acts downstream of ERK (MAPK1/ERK2 and MAPK3/ERK1) signaling and mediates mitogenic and stress-induced activation of the transcription factors CREB1, ETV1/ER81 and NR4A1/NUR77, regulates translation through RPS6 and EIF4B phosphorylation, and mediates cellular proliferation, survival, and differentiation by modulating mTOR signaling and repressing pro-apoptotic function of BAD and DAPK1. In fibroblast, is required for EGF-stimulated phosphorylation of CREB1 and histone H3 at 'Ser-10', which results in the subsequent transcriptional activation of several immediate-early genes. In response to mitogenic stimulation (EGF and PMA), phosphorylates and activates NR4A1/NUR77 and ETV1/ER81 transcription factors and the cofactor CREBBP. Upon insulin-derived signal, acts indirectly on the transcription regulation of several genes by phosphorylating GSK3B at 'Ser-9' and inhibiting its activity. Phosphorylates RPS6 in response to serum or EGF via an mTOR-independent mechanism and promotes translation initiation by facilitating assembly of the preinitiation complex. In response to insulin, phosphorylates EIF4B, enhancing EIF4B affinity for the EIF3 complex and stimulating cap-dependent translation. Is involved in the mTOR nutrient-sensing pathway by directly phosphorylating TSC2 at 'Ser-1798', which potently inhibits TSC2 ability to suppress mTOR signaling, and mediates phosphorylation of RPTOR, which regulates mTORC1 activity and may promote rapamycin-sensitive signaling independently of the PI3K/AKT pathway. Mediates cell survival by phosphorylating the pro-apoptotic proteins BAD and DAPK1 and suppressing their pro-apoptotic function. Promotes the survival of hepatic stellate cells by phosphorylating CEBPB in response to the hepatotoxin carbon tetrachloride (CCl4). Is involved in cell cycle regulation by phosphorylating the CDK inhibitor CDKN1B, which promotes CDKN1B association with 14-3-3 proteins and prevents its translocation to the nucleus and inhibition of G1 progression. In LPS-stimulated dendritic cells, is involved in TLR4-induced macropinocytosis, and in myeloma cells, acts as effector of FGFR3-mediated transformation signaling, after direct phosphorylation at Tyr-529 by FGFR3. Negatively regulates EGF-induced MAPK1/3 phosphorylation via phosphorylation of SOS1. Phosphorylates SOS1 at 'Ser-1134' and 'Ser-1161' that create YWHAB and YWHAE binding sites and which contribute to the negative regulation of MAPK1/3 phosphorylation. Phosphorylates EPHA2 at 'Ser-897', the RPS6KA-EPHA2 signaling pathway controls cell migration. Acts as a regulator of osteoblast differentiation by mediating phosphorylation of ATF4, thereby promoting ATF4 transactivation activity. The polypeptide is Ribosomal protein S6 kinase alpha-3 (Rps6ka3) (Mus musculus (Mouse)).